The sequence spans 1517 residues: uncharacterized protein (1517 aa).

The segment covering methionine 1–glutamine 13 has biased composition (polar residues). Residues methionine 1 to asparagine 26 form a disordered region. Asparagine 35, asparagine 40, and asparagine 76 each carry an N-linked (GlcNAc...) asparagine glycan. 5 consecutive transmembrane segments (helical) span residues alanine 231–isoleucine 251, alanine 397–cysteine 417, phenylalanine 510–isoleucine 530, proline 612–leucine 632, and valine 720–leucine 740. N-linked (GlcNAc...) asparagine glycosylation occurs at asparagine 917. Helical transmembrane passes span phenylalanine 956–leucine 976, valine 985–glutamate 1005, valine 1051–serine 1071, and glycine 1114–leucine 1134. An N-linked (GlcNAc...) asparagine glycan is attached at asparagine 1178. A helical membrane pass occupies residues proline 1261–valine 1281. A glycan (N-linked (GlcNAc...) asparagine) is linked at asparagine 1321. A run of 2 helical transmembrane segments spans residues alanine 1353–valine 1373 and valine 1408–isoleucine 1428.

It to S.pombe SpAC22F3.04.

It is found in the membrane. This is an uncharacterized protein from Schizosaccharomyces pombe (strain 972 / ATCC 24843) (Fission yeast).